The primary structure comprises 884 residues: Cadherin-1 (884 aa).

The N-terminal stretch at 1–23 is a signal peptide; it reads MGARCRSFSALLLLLQVSSWLCQ. The propeptide occupies 24–156; sequence ELEPESCSPG…VYPGLRRQKR (133 aa). Positions 119–139 are disordered; that stretch reads KSMGHHHHRHHHRDPASESNP. Positions 121–131 are enriched in basic residues; the sequence is MGHHHHRHHHR. Cadherin domains lie at 157 to 264, 265 to 377, 378 to 488, 489 to 595, and 596 to 699; these read DWVI…RPEF, TQEV…APVF, NPST…APIF, MPAE…DNAP, and IPEP…NCMK. Residues 157–709 are Extracellular-facing; the sequence is DWVIPPISCP…AGIVAAGLQV (553 aa). D259 is a binding site for Ca(2+). O-linked (Man...) serine glycans are attached at residues S282 and S287. Ca(2+) is bound at residue D290. Residues T360, T472, T474, and T511 are each glycosylated (O-linked (Man...) threonine). N560 carries N-linked (GlcNAc...) asparagine glycosylation. O-linked (Man...) threonine glycans are attached at residues T578, T580, and T582. N-linked (GlcNAc...) asparagine glycosylation is present at N639. A helical membrane pass occupies residues 710-733; it reads PAILGILGGILALLILILLLLLFL. Residues 734–884 are Cytoplasmic-facing; that stretch reads RRRTVVKEPL…ADMYGGGEDD (151 aa). The interval 749-808 is disordered; sequence DTRDNVYYYDEEGGGEEDQDFDLSQLHRGLDARPEVTRNDVAPTLMSVPQYRPRPANPDE. A phosphotyrosine; by SRC mark is found at Y755, Y756, and Y757. The segment covering 757–769 has biased composition (acidic residues); it reads YDEEGGGEEDQDF. The required for binding CTNND1 and PSEN1 stretch occupies residues 760-771; it reads EGGGEEDQDFDL. S772 is subject to Phosphoserine. Residues 776–786 show a composition bias toward basic and acidic residues; the sequence is RGLDARPEVTR. Phosphoserine occurs at positions 795, 840, 842, and 848. The interval 813–884 is required for binding alpha, beta and gamma catenins; sequence IDENLKAADS…ADMYGGGEDD (72 aa).

As to quaternary structure, homodimer; disulfide-linked. Component of an E-cadherin/ catenin adhesion complex composed of at least E-cadherin/CDH1, beta-catenin/CTNNB1 or gamma-catenin/JUP, and potentially alpha-catenin/CTNNA1; the complex is located to adherens junctions. Found in a complex composed of CDH1, RAP1A and PKP3; PKP3 acts as a scaffold protein within the complex, the complex is required for CDH1 localization to mature desmosome cell junctions. Interacts with the TRPV4 and CTNNB1 complex. Interacts with CTNND1. The stable association of CTNNA1 is controversial as CTNNA1 was shown not to bind to F-actin when assembled in the complex. Alternatively, the CTNNA1-containing complex may be linked to F-actin by other proteins such as LIMA1. Interaction with PSEN1, cleaves CDH1 resulting in the disassociation of cadherin-based adherens junctions (CAJs). Interacts with AJAP1 and DLGAP5. Interacts with TBC1D2. Interacts with LIMA1. Interacts with CAV1. Interacts with PIP5K1C. Interacts with RAB8B. Interacts with DDR1; this stabilizes CDH1 at the cell surface and inhibits its internalization. Interacts with RAPGEF2. Interacts with KLRG1. Forms a ternary complex composed of ADAM10, CADH1 and EPHA4; within the complex, CADH1 is cleaved by ADAM10 which disrupts adherens junctions. Interacts with SPEF1. Interacts with CTNNB1 and PKP2. Interacts with AMOTL2; the interaction may facilitate binding of radial actin fibers to cell junction complexes. Interacts with DSG3; the interaction is required for CDH1 localization to developing adherens junctions. In terms of processing, during apoptosis or with calcium influx, cleaved by a membrane-bound metalloproteinase (ADAM10), PS1/gamma-secretase and caspase-3. Processing by the metalloproteinase, induced by calcium influx, causes disruption of cell-cell adhesion and the subsequent release of beta-catenin into the cytoplasm. The residual membrane-tethered cleavage product is rapidly degraded via an intracellular proteolytic pathway. Cleavage by caspase-3 releases the cytoplasmic tail resulting in disintegration of the actin microfilament system. The gamma-secretase-mediated cleavage promotes disassembly of adherens junctions. During development of the cochlear organ of Corti, cleavage by ADAM10 at adherens junctions promotes pillar cell separation. O-glycosylated. O-manosylated by TMTC1, TMTC2, TMTC3 or TMTC4. Ser-287 and Thr-511 are O-manosylated by TMTC2 or TMTC4 but not TMTC1 or TMTC3. Post-translationally, N-glycosylation at Asn-639 is essential for expression, folding and trafficking. Addition of bisecting N-acetylglucosamine by MGAT3 modulates its cell membrane location. In terms of processing, ubiquitinated by a SCF complex containing SKP2, which requires prior phosphorylation by CK1/CSNK1A1. Ubiquitinated by CBLL1/HAKAI, requires prior phosphorylation at Tyr-756. Expressed in inner and outer pillar cells of the organ of Corti (at protein level). Expressed in granuloma macrophages (at protein level). Expressed in the epidermal keratinocytes of the skin from birth (at protein level). Expressed in non-neural epithelial tissues.

It is found in the cell junction. Its subcellular location is the adherens junction. It localises to the cell membrane. The protein localises to the endosome. The protein resides in the golgi apparatus. It is found in the trans-Golgi network. Its subcellular location is the cytoplasm. It localises to the desmosome. Cadherins are calcium-dependent cell adhesion proteins. They preferentially interact with themselves in a homophilic manner in connecting cells; cadherins may thus contribute to the sorting of heterogeneous cell types. CDH1 is involved in mechanisms regulating cell-cell adhesions, mobility and proliferation of epithelial cells. Promotes organization of radial actin fiber structure and cellular response to contractile forces, via its interaction with AMOTL2 which facilitates anchoring of radial actin fibers to CDH1 junction complexes at the cell membrane. Plays a role in the early stages of desmosome cell-cell junction formation via facilitating the recruitment of DSG2 and DSP to desmosome plaques. Has a potent invasive suppressor role. It is a ligand for integrin alpha-E/beta-7. In terms of biological role, E-Cad/CTF2 promotes non-amyloidogenic degradation of Abeta precursors. Has a strong inhibitory effect on APP C99 and C83 production. Functionally, (Microbial infection) Does not function as a receptor for L.monocytogenes internalin A (InlA); mutating a single surface-exposed residue confers receptor activity to this protein and promotes uptake of the bacteria. This Mus musculus (Mouse) protein is Cadherin-1 (Cdh1).